Consider the following 252-residue polypeptide: tRNA (guanine-N(1)-)-methyltransferase (252 aa).

Residues Gly-113 and 133–138 (IGDYVL) contribute to the S-adenosyl-L-methionine site.

It belongs to the RNA methyltransferase TrmD family. Homodimer.

It localises to the cytoplasm. The catalysed reaction is guanosine(37) in tRNA + S-adenosyl-L-methionine = N(1)-methylguanosine(37) in tRNA + S-adenosyl-L-homocysteine + H(+). Functionally, specifically methylates guanosine-37 in various tRNAs. The sequence is that of tRNA (guanine-N(1)-)-methyltransferase from Baumannia cicadellinicola subsp. Homalodisca coagulata.